A 416-amino-acid chain; its full sequence is Serine hydroxymethyltransferase (416 aa).

(6S)-5,6,7,8-tetrahydrofolate-binding positions include leucine 121 and 125 to 127 (GHL). Lysine 230 is modified (N6-(pyridoxal phosphate)lysine). Position 354 to 356 (354 to 356 (SPF)) interacts with (6S)-5,6,7,8-tetrahydrofolate.

It belongs to the SHMT family. In terms of assembly, homodimer. Requires pyridoxal 5'-phosphate as cofactor.

It localises to the cytoplasm. It catalyses the reaction (6R)-5,10-methylene-5,6,7,8-tetrahydrofolate + glycine + H2O = (6S)-5,6,7,8-tetrahydrofolate + L-serine. It participates in one-carbon metabolism; tetrahydrofolate interconversion. The protein operates within amino-acid biosynthesis; glycine biosynthesis; glycine from L-serine: step 1/1. In terms of biological role, catalyzes the reversible interconversion of serine and glycine with tetrahydrofolate (THF) serving as the one-carbon carrier. This reaction serves as the major source of one-carbon groups required for the biosynthesis of purines, thymidylate, methionine, and other important biomolecules. Also exhibits THF-independent aldolase activity toward beta-hydroxyamino acids, producing glycine and aldehydes, via a retro-aldol mechanism. The protein is Serine hydroxymethyltransferase of Prochlorococcus marinus (strain MIT 9211).